Consider the following 633-residue polypeptide: MHGLLLAGLLALPMNVLAHPAEQHASNVLSRRGVDIESFRLPLKAKYMDSDAAAQKIQAMSFSKDDDYVSTATKLVKSTFPKSTFRVVDDHYIGTNGIGHVHFKQTAHGLDIDNSDFNVNIDRDGKVFSFGNSFFTGEIPKENPMVKRAFSDPVKALKGAVKALNLPVKSDNAKAKTTAGKESFEFMGTTGALSAPKANLVYLQKEDGTLALTWRVETDVGDNWLLTYVDAHNSETVHNVVDYVASAEFKVFAWGLNDPTEGNPTSIRDPWTDSSPYTWHSDGMTKYPTTRGNNAIAQDNPTGGSTYINNYRPQSPNLIFNYPWSPTATPPSSYKDFSITQLFYTTNRFHDLLYSFGFNEAAGNFQVNNGNKGGRGNDFAIVNAQDGSGTNNANFATPPDGSPGRMRMYNWTTARPNRDGCLEAGIVIHEYAHGLSNRLCGGPANSGCLNALESGGMGEGWGDFYATAIRLKPRDTKDTNYSMGAWAANNPKGIRAYLYSTNLQTNPYMYTSVNSLREVHQIGTVWATMLYDLMWALIEAHGGTYSANPVFRNGVPQDGRHLAMKLVMDGMALQPCNPNFVQARDAILDADRALTNSANKCTIWKAFAKRGLGYGAKYDARNRTGSNRLPPGC.

The signal sequence occupies residues 1–18 (MHGLLLAGLLALPMNVLA). Residues 19–246 (HPAEQHASNV…VHNVVDYVAS (228 aa)) constitute a propeptide that is removed on maturation. Residue Asn-410 is glycosylated (N-linked (GlcNAc...) asparagine). Position 429 (His-429) interacts with Zn(2+). Glu-430 is an active-site residue. His-433 is a Zn(2+) binding site. N-linked (GlcNAc...) asparagine glycosylation is found at Asn-480 and Asn-622.

Belongs to the peptidase M36 family. It depends on Zn(2+) as a cofactor.

The protein localises to the secreted. Secreted metalloproteinase probably acting as a virulence factor. The polypeptide is Extracellular metalloproteinase 3 (MEP3) (Trichophyton tonsurans (Scalp ringworm fungus)).